We begin with the raw amino-acid sequence, 370 residues long: Putative agmatine deiminase (370 aa).

Residue C361 is the Amidino-cysteine intermediate of the active site.

Belongs to the agmatine deiminase family.

The catalysed reaction is agmatine + H2O = N-carbamoylputrescine + NH4(+). The sequence is that of Putative agmatine deiminase from Shewanella baltica (strain OS223).